Consider the following 248-residue polypeptide: Pyridoxine 5'-phosphate synthase (248 aa).

Asn12 contributes to the 3-amino-2-oxopropyl phosphate binding site. A 1-deoxy-D-xylulose 5-phosphate-binding site is contributed by 14–15 (DH). Arg23 lines the 3-amino-2-oxopropyl phosphate pocket. The Proton acceptor role is filled by His48. 1-deoxy-D-xylulose 5-phosphate contacts are provided by Arg50 and His55. The active-site Proton acceptor is the Glu75. Residue Thr105 participates in 1-deoxy-D-xylulose 5-phosphate binding. The active-site Proton donor is His199. Residues Gly200 and 221–222 (GH) each bind 3-amino-2-oxopropyl phosphate.

It belongs to the PNP synthase family. Homooctamer; tetramer of dimers.

It localises to the cytoplasm. It catalyses the reaction 3-amino-2-oxopropyl phosphate + 1-deoxy-D-xylulose 5-phosphate = pyridoxine 5'-phosphate + phosphate + 2 H2O + H(+). Its pathway is cofactor biosynthesis; pyridoxine 5'-phosphate biosynthesis; pyridoxine 5'-phosphate from D-erythrose 4-phosphate: step 5/5. Its function is as follows. Catalyzes the complicated ring closure reaction between the two acyclic compounds 1-deoxy-D-xylulose-5-phosphate (DXP) and 3-amino-2-oxopropyl phosphate (1-amino-acetone-3-phosphate or AAP) to form pyridoxine 5'-phosphate (PNP) and inorganic phosphate. This is Pyridoxine 5'-phosphate synthase from Jannaschia sp. (strain CCS1).